We begin with the raw amino-acid sequence, 535 residues long: Berberine bridge enzyme-like 3 (535 aa).

The signal sequence occupies residues 1–19; the sequence is MKEALFGLYLVLLVSGLEA. Residues Cys-32 and Cys-95 are joined by a disulfide bond. An N-linked (GlcNAc...) asparagine glycan is attached at Asn-52. The FAD-binding PCMH-type domain maps to 73 to 247; that stretch reads NNKNLLAIVV…LSWKINLVEV (175 aa). Residues 110 to 172 constitute a cross-link (6-(S-cysteinyl)-8alpha-(pros-histidyl)-FAD (His-Cys)); sequence HDNEGLSYVS…QTLAFPAGIC (63 aa). N-linked (GlcNAc...) asparagine glycosylation is found at Asn-214, Asn-257, Asn-292, Asn-321, Asn-341, Asn-415, Asn-439, and Asn-444.

The protein belongs to the oxygen-dependent FAD-linked oxidoreductase family. Requires FAD as cofactor. Post-translationally, the FAD cofactor is bound via a bicovalent 6-S-cysteinyl, 8alpha-N1-histidyl FAD linkage.

The protein localises to the endoplasmic reticulum. It is found in the cell membrane. The protein resides in the secreted. It localises to the cell wall. In terms of biological role, flavin-dependent oxidoreductase involved in the biosynthetic pathway to 4-hydroxyindole-3-carbonyl nitrile (4-OH-ICN), a cyanogenic metabolite required for inducible pathogen defense. Converts indole cyanohydrin into indole-3-carbonyl nitrile (ICN). The chain is Berberine bridge enzyme-like 3 from Arabidopsis thaliana (Mouse-ear cress).